The chain runs to 274 residues: Diaminopimelate epimerase (274 aa).

Residues Asn11, Gln44, and Asn64 each coordinate substrate. Cys73 serves as the catalytic Proton donor. Residues 74-75 (GN), Asn157, Asn190, and 208-209 (ER) each bind substrate. The active-site Proton acceptor is the Cys217. 218-219 (GS) contributes to the substrate binding site.

Belongs to the diaminopimelate epimerase family. Homodimer.

Its subcellular location is the cytoplasm. The catalysed reaction is (2S,6S)-2,6-diaminopimelate = meso-2,6-diaminopimelate. It functions in the pathway amino-acid biosynthesis; L-lysine biosynthesis via DAP pathway; DL-2,6-diaminopimelate from LL-2,6-diaminopimelate: step 1/1. Catalyzes the stereoinversion of LL-2,6-diaminopimelate (L,L-DAP) to meso-diaminopimelate (meso-DAP), a precursor of L-lysine and an essential component of the bacterial peptidoglycan. This Yersinia pseudotuberculosis serotype O:1b (strain IP 31758) protein is Diaminopimelate epimerase.